A 1235-amino-acid polypeptide reads, in one-letter code: Ubiquitin carboxyl-terminal hydrolase 40 (1235 aa).

One can recognise a USP domain in the interval 41–482 (SGIRNQGGTC…SAYMLFYRKA (442 aa)). The active-site Nucleophile is C50. Catalysis depends on H305, which acts as the Proton acceptor.

This sequence belongs to the peptidase C19 family.

It catalyses the reaction Thiol-dependent hydrolysis of ester, thioester, amide, peptide and isopeptide bonds formed by the C-terminal Gly of ubiquitin (a 76-residue protein attached to proteins as an intracellular targeting signal).. This is Ubiquitin carboxyl-terminal hydrolase 40 (Usp40) from Mus musculus (Mouse).